We begin with the raw amino-acid sequence, 267 residues long: Ribosomal RNA small subunit methyltransferase A (267 aa).

Asn18, Leu20, Gly45, Glu66, Asp91, and Asn112 together coordinate S-adenosyl-L-methionine.

The protein belongs to the class I-like SAM-binding methyltransferase superfamily. rRNA adenine N(6)-methyltransferase family. RsmA subfamily.

It is found in the cytoplasm. The enzyme catalyses adenosine(1518)/adenosine(1519) in 16S rRNA + 4 S-adenosyl-L-methionine = N(6)-dimethyladenosine(1518)/N(6)-dimethyladenosine(1519) in 16S rRNA + 4 S-adenosyl-L-homocysteine + 4 H(+). Its function is as follows. Specifically dimethylates two adjacent adenosines (A1518 and A1519) in the loop of a conserved hairpin near the 3'-end of 16S rRNA in the 30S particle. May play a critical role in biogenesis of 30S subunits. The sequence is that of Ribosomal RNA small subunit methyltransferase A from Shewanella amazonensis (strain ATCC BAA-1098 / SB2B).